A 266-amino-acid polypeptide reads, in one-letter code: Glutamate racemase (266 aa).

Substrate-binding positions include 9–10 (DS) and 41–42 (YG). The active-site Proton donor/acceptor is the Cys-72. 73–74 (NT) serves as a coordination point for substrate. Cys-183 (proton donor/acceptor) is an active-site residue. 184-185 (TH) contacts substrate.

This sequence belongs to the aspartate/glutamate racemases family.

The catalysed reaction is L-glutamate = D-glutamate. Its pathway is cell wall biogenesis; peptidoglycan biosynthesis. Its function is as follows. Provides the (R)-glutamate required for cell wall biosynthesis. This is Glutamate racemase from Listeria monocytogenes serotype 4a (strain HCC23).